The primary structure comprises 148 residues: Small ribosomal subunit protein uS9 (148 aa).

Belongs to the universal ribosomal protein uS9 family.

The chain is Small ribosomal subunit protein uS9 (RpS16) from Aedes aegypti (Yellowfever mosquito).